The primary structure comprises 220 residues: Apoptosis regulator BALF1 (220 aa).

It belongs to the Epstein-Barr virus BALF1 family. Interacts with BHRF1; this interaction modulates BHRF1 activity. Interacts with host BAX and BAK1.

The protein resides in the host cytoplasm. Its function is as follows. Modulates the antiapoptotic activity of the viral protein BHRF1. May also play an active part in oncogenesis in Burkitt's lymphomy and nasopharyngeal carcinoma. This chain is Apoptosis regulator BALF1, found in Homo sapiens (Human).